The following is a 108-amino-acid chain: Replication initiation control protein YabA (108 aa).

4 residues coordinate Zn(2+): His82, Cys84, Cys98, and Cys101.

The protein belongs to the YabA family. As to quaternary structure, homotetramer. Interacts with both DnaA and DnaN, acting as a bridge between these two proteins. Requires Zn(2+) as cofactor.

The protein resides in the cytoplasm. The protein localises to the nucleoid. Its function is as follows. Involved in control of chromosome replication initiation. Inhibits the cooperative binding of DnaA to the oriC region, thus negatively regulating initiation of chromosome replication. Inhibits the ability of DnaA-ATP to form a helix on DNA; does not disassemble preformed DnaA-DNA helices. Decreases the residence time of DnaA on the chromosome at its binding sites (oriC, replication forks and promoter-binding sites). Tethers DnaA to the replication machinery via the DNA polymerase beta sliding clamp subunit (dnaN). Associates with oriC and other DnaA targets on the chromosome in a DnaA-dependent manner. The chain is Replication initiation control protein YabA from Streptococcus agalactiae serotype Ia (strain ATCC 27591 / A909 / CDC SS700).